The primary structure comprises 531 residues: Probable cytochrome P450 4e1 (531 aa).

Residues glutamate 307 and cysteine 444 each contribute to the heme site.

It belongs to the cytochrome P450 family. The cofactor is heme.

The protein resides in the endoplasmic reticulum membrane. It is found in the microsome membrane. Functionally, may be involved in the metabolism of insect hormones and in the breakdown of synthetic insecticides. This chain is Probable cytochrome P450 4e1 (Cyp4e1), found in Drosophila melanogaster (Fruit fly).